The chain runs to 381 residues: L-lactate dehydrogenase A-like 6B (381 aa).

NAD(+) contacts are provided by residues 101 to 106 (DVDEGR) and arginine 148. Positions 155, 187, and 218 each coordinate substrate. Asparagine 187 is an NAD(+) binding site. The active-site Proton acceptor is the histidine 242. Threonine 297 contributes to the substrate binding site.

Belongs to the LDH/MDH superfamily. LDH family.

It catalyses the reaction (S)-lactate + NAD(+) = pyruvate + NADH + H(+). It functions in the pathway fermentation; pyruvate fermentation to lactate; (S)-lactate from pyruvate: step 1/1. In Bos taurus (Bovine), this protein is L-lactate dehydrogenase A-like 6B (LDHAL6B).